A 302-amino-acid chain; its full sequence is UDP-N-acetylenolpyruvoylglucosamine reductase (302 aa).

One can recognise an FAD-binding PCMH-type domain in the interval 31-210; that stretch reads IGGQTKVYFR…ENEVLELKKK (180 aa). Arg175 is a catalytic residue. Ser224 acts as the Proton donor in catalysis. Residue Glu297 is part of the active site.

This sequence belongs to the MurB family. It depends on FAD as a cofactor.

It localises to the cytoplasm. The catalysed reaction is UDP-N-acetyl-alpha-D-muramate + NADP(+) = UDP-N-acetyl-3-O-(1-carboxyvinyl)-alpha-D-glucosamine + NADPH + H(+). The protein operates within cell wall biogenesis; peptidoglycan biosynthesis. Cell wall formation. The protein is UDP-N-acetylenolpyruvoylglucosamine reductase of Pelagibacter ubique (strain HTCC1062).